A 253-amino-acid polypeptide reads, in one-letter code: Ribonuclease HII (253 aa).

The region spanning 32 to 223 (APVAGLDEAG…FKTSGEEDRI (192 aa)) is the RNase H type-2 domain. The a divalent metal cation site is built by D38, E39, and D130.

Belongs to the RNase HII family. The cofactor is Mn(2+). Requires Mg(2+) as cofactor.

It localises to the cytoplasm. It catalyses the reaction Endonucleolytic cleavage to 5'-phosphomonoester.. Endonuclease that specifically degrades the RNA of RNA-DNA hybrids. In Chelativorans sp. (strain BNC1), this protein is Ribonuclease HII.